Here is a 1323-residue protein sequence, read N- to C-terminus: ABC transporter gloK (1323 aa).

Helical transmembrane passes span 6–26 (AIAS…TLEA), 102–122 (PHAL…AGIL), 138–158 (VAYG…VMST), 217–237 (IWAS…RLGV), 240–260 (VAAV…VFGF), 325–345 (LLVG…VFAF), and 359–379 (PLLA…GQAV). An ABC transmembrane type-1 1 domain is found at 142 to 380 (LIAAYAIVYI…IFSLLGQAVS (239 aa)). Residues 471-697 (IRDCSACWSK…SSYLESLGTR (227 aa)) form the ABC transporter 1 domain. ATP is bound at residue 503–510 (GPIGSGKS). 7 consecutive transmembrane segments (helical) span residues 748–768 (GWVT…GLVF), 795–815 (YALW…WLMI), 821–841 (AAIQ…LVYF), 859–879 (LIDM…LSCI), 891–910 (YVAA…QLFY), 976–996 (LNLT…SIAL), and 1006–1026 (IGVA…LVYT). An ABC transmembrane type-1 2 domain is found at 752 to 1031 (WWVFVLLCSG…TLVYTWTSLE (280 aa)). The region spanning 1069–1300 (IRFQSVSAAY…PSFFASLLKA (232 aa)) is the ABC transporter 2 domain. 1103–1110 (GRTGSGKS) lines the ATP pocket.

The protein belongs to the ABC transporter superfamily. ABCC family. Conjugate transporter (TC 3.A.1.208) subfamily.

It is found in the cell membrane. In terms of biological role, 3-isopropylmalate dehydratase large subunit; part of the gene cluster that mediates the biosynthesis of pneumocandins, lipohexapeptides of the echinocandin family that prevent fungal cell wall formation by non-competitive inhibition of beta-1,3-glucan synthase. Possibly secretes antifungal pneumocandins, thus avoiding of intracellular accumulation and ameliorating the toxicity to the producing cells. The polypeptide is ABC transporter gloK (Glarea lozoyensis (strain ATCC 20868 / MF5171)).